A 1413-amino-acid polypeptide reads, in one-letter code: Zinc finger SWIM domain-containing protein 8 (1413 aa).

Phosphoserine occurs at positions 36, 48, and 53. The segment at 45-65 is disordered; the sequence is RKQSAGPNSPTGGGGGGGSGG. Residues 55–65 show a composition bias toward gly residues; the sequence is TGGGGGGGSGG. The segment at 172 to 208 adopts an SWIM-type zinc-finger fold; sequence YNVAVMFDRCRVTSCSCTCGAGAKWCTHVVALCLFRI. The interval 600 to 817 is disordered; the sequence is ESQTHKPQTL…ESHAPHVPNQ (218 aa). Residues 604–625 are compositionally biased toward polar residues; that stretch reads HKPQTLSSFYSSSRPATASQRS. The segment covering 704–715 has biased composition (gly residues); it reads SRGGYNGRGWGS. T724 carries the post-translational modification Phosphothreonine. Residues 729–744 are compositionally biased toward polar residues; it reads IDSSAPETTSDSSPTL. 3 positions are modified to phosphoserine: S738, S741, and S745. The span at 759–794 shows a compositional bias: low complexity; it reads GRGQDSDSISSSSSDSLGSSSSSGSRRASASGGARA. A compositionally biased stretch (basic and acidic residues) spans 795–811; it reads KTVEVGRYKGRRPESHA. Phosphoserine is present on residues S852 and S1412.

This sequence belongs to the ZSWIM8 family. In terms of assembly, component of the SCF-like E3 ubiquitin-protein ligase complex which contains CUL3, RBX1, ELOB, ELOC and ZSWIM8. Interacts with DAB1.

Its subcellular location is the cytoplasm. The protein resides in the cytosol. It participates in protein modification; protein ubiquitination. Functionally, substrate recognition component of a SCF-like E3 ubiquitin-protein ligase complex that promotes target-directed microRNA degradation (TDMD), a process that mediates degradation of microRNAs (miRNAs). The SCF-like E3 ubiquitin-protein ligase complex acts by catalyzing ubiquitination and subsequent degradation of AGO proteins (AGO1, AGO2, AGO3 and/or AGO4), thereby exposing miRNAs for degradation. Specifically recognizes and binds AGO proteins when they are engaged with a TDMD target. May also acts as a regulator of axon guidance: specifically recognizes misfolded ROBO3 and promotes its ubiquitination and subsequent degradation. Plays an essential role for proper embryonic development of heart and lung. Controls protein quality of DAB1, a key signal molecule for brain development, thus protecting its signaling strength. Mechanistically, recognizes intrinsically disordered regions of DAB1 and eliminates misfolded DAB1 that cannot be properly phosphorylated. The chain is Zinc finger SWIM domain-containing protein 8 from Bos taurus (Bovine).